A 146-amino-acid polypeptide reads, in one-letter code: Hemoglobin subunit beta-1/2 (146 aa).

The region spanning 2–146 (EWTDKERSII…VVSALGKQYH (145 aa)) is the Globin domain. Positions 63 and 92 each coordinate heme b.

It belongs to the globin family. In terms of assembly, hb1 is a heterotetramer of two alpha-1 chains and two beta chains. Hb2 is a heterotetramer of two alpha-2 chains and two beta chains. As to expression, red blood cells.

Functionally, involved in oxygen transport from gills to the various peripheral tissues. In Trematomus newnesi (Dusky notothen), this protein is Hemoglobin subunit beta-1/2.